The chain runs to 254 residues: E3 ubiquitin-protein ligase NEURL3 (254 aa).

One can recognise an NHR domain in the interval 17–174 (ALSFHGDATG…TTKAIELLDP (158 aa)). The segment at 197 to 236 (CVICFHNTANTRLMPCGHSQFCGSCAWHIFKDTARCPMCR) adopts an RING-type zinc-finger fold.

Its subcellular location is the cytoplasm. The enzyme catalyses S-ubiquitinyl-[E2 ubiquitin-conjugating enzyme]-L-cysteine + [acceptor protein]-L-lysine = [E2 ubiquitin-conjugating enzyme]-L-cysteine + N(6)-ubiquitinyl-[acceptor protein]-L-lysine.. It participates in protein modification; protein ubiquitination. In terms of biological role, E3 ubiquitin-protein ligase that plays a role in various biological processes such as lung development or innate immunity. Seems to utilize UBE2E1. Promotes innate antiviral response by catalyzing 'Lys-63'-linked ubiquitination of IRF7. Also inhibits hepatitis C virus assembly by directly binding to viral E1 envelope glycoprotein to disrupt its interaction with E2. Plays an essential role in TLR4-mediated activation of MAPK pathways by promoting 'Lys-48'-linked polyubiquitination of the phosphatase DUSP1/MKP1. The sequence is that of E3 ubiquitin-protein ligase NEURL3 (Neurl3) from Rattus norvegicus (Rat).